A 228-amino-acid polypeptide reads, in one-letter code: Ribonuclease HII (228 aa).

The RNase H type-2 domain maps to 1–210 (MKIAGIDEAG…LKKIAEKVES (210 aa)). A divalent metal cation contacts are provided by D7, E8, and D105.

This sequence belongs to the RNase HII family. Monomer. Requires Mn(2+) as cofactor. The cofactor is Mg(2+).

The protein localises to the cytoplasm. It catalyses the reaction Endonucleolytic cleavage to 5'-phosphomonoester.. Functionally, endonuclease that specifically degrades the RNA of RNA-DNA hybrids. This chain is Ribonuclease HII (rnhB), found in Thermococcus kodakarensis (strain ATCC BAA-918 / JCM 12380 / KOD1) (Pyrococcus kodakaraensis (strain KOD1)).